An 81-amino-acid polypeptide reads, in one-letter code: Large ribosomal subunit protein bL31B (81 aa).

It belongs to the bacterial ribosomal protein bL31 family. Type B subfamily. As to quaternary structure, part of the 50S ribosomal subunit.

The polypeptide is Large ribosomal subunit protein bL31B (Bacillus cereus (strain G9842)).